The sequence spans 507 residues: Steroid 17-alpha-hydroxylase/17,20 lyase (507 aa).

Cys441 lines the heme pocket.

This sequence belongs to the cytochrome P450 family. Requires heme as cofactor.

Its subcellular location is the endoplasmic reticulum membrane. It localises to the microsome membrane. The catalysed reaction is a C21-steroid + reduced [NADPH--hemoprotein reductase] + O2 = a 17alpha-hydroxy-C21-steroid + oxidized [NADPH--hemoprotein reductase] + H2O + H(+). It carries out the reaction progesterone + reduced [NADPH--hemoprotein reductase] + O2 = 17alpha-hydroxyprogesterone + oxidized [NADPH--hemoprotein reductase] + H2O + H(+). It catalyses the reaction pregnenolone + reduced [NADPH--hemoprotein reductase] + O2 = 17alpha-hydroxypregnenolone + oxidized [NADPH--hemoprotein reductase] + H2O + H(+). The enzyme catalyses 17alpha-hydroxyprogesterone + reduced [NADPH--hemoprotein reductase] + O2 = androst-4-ene-3,17-dione + acetate + oxidized [NADPH--hemoprotein reductase] + H2O + 2 H(+). The catalysed reaction is 17alpha-hydroxyprogesterone + reduced [NADPH--hemoprotein reductase] + O2 = 16alpha,17alpha-dihydroxyprogesterone + oxidized [NADPH--hemoprotein reductase] + H2O + H(+). It carries out the reaction 16alpha,17alpha-dihydroxyprogesterone + reduced [NADPH--hemoprotein reductase] + O2 = 6beta,16alpha,17alpha-trihydroxyprogesterone + oxidized [NADPH--hemoprotein reductase] + H2O + H(+). It catalyses the reaction 17alpha-hydroxypregnenolone + reduced [NADPH--hemoprotein reductase] + O2 = 3beta-hydroxyandrost-5-en-17-one + acetate + oxidized [NADPH--hemoprotein reductase] + H2O + 2 H(+). The enzyme catalyses 16alpha,17alpha-dihydroxypregnenolone + reduced [NADPH--hemoprotein reductase] + O2 = 3beta,16alpha-dihydroxy-androst-5-en-17-one + acetate + oxidized [NADPH--hemoprotein reductase] + H2O + 2 H(+). The catalysed reaction is 3beta-hydroxyandrost-5-en-17-one + reduced [NADPH--hemoprotein reductase] + O2 = 3beta,16alpha-dihydroxy-androst-5-en-17-one + oxidized [NADPH--hemoprotein reductase] + H2O + H(+). It carries out the reaction androst-4-ene-3,17-dione + reduced [NADPH--hemoprotein reductase] + O2 = 16alpha-hydroxyandrost-4-ene-3,17-dione + oxidized [NADPH--hemoprotein reductase] + H2O + H(+). Its pathway is steroid hormone biosynthesis. It functions in the pathway steroid biosynthesis; glucocorticoid biosynthesis. Its activity is regulated as follows. Regulated predominantly by intracellular cAMP levels. The 17,20-lyase activity is stimulated by cytochrome b5, which acts as an allosteric effector increasing the Vmax of the lyase activity. Its function is as follows. A cytochrome P450 monooxygenase involved in corticoid and androgen biosynthesis. Catalyzes 17-alpha hydroxylation of C21 steroids, which is common for both pathways. A second oxidative step, required only for androgen synthesis, involves an acyl-carbon cleavage. The 17-alpha hydroxy intermediates, as part of adrenal glucocorticoids biosynthesis pathway, are precursors of cortisol. Hydroxylates steroid hormones, pregnenolone and progesterone to form 17-alpha hydroxy metabolites, followed by the cleavage of the C17-C20 bond to form C19 steroids, dehydroepiandrosterone (DHEA) and androstenedione. Has 16-alpha hydroxylase activity. Catalyzes 16-alpha hydroxylation of 17-alpha hydroxy pregnenolone, followed by the cleavage of the C17-C20 bond to form 16-alpha-hydroxy DHEA. Also 16-alpha hydroxylates androgens, relevant for estriol synthesis. Mechanistically, uses molecular oxygen inserting one oxygen atom into a substrate, and reducing the second into a water molecule, with two electrons provided by NADPH via cytochrome P450 reductase (CPR; NADPH-ferrihemoprotein reductase). The polypeptide is Steroid 17-alpha-hydroxylase/17,20 lyase (Cyp17a1) (Rattus norvegicus (Rat)).